The primary structure comprises 824 residues: Leucine--tRNA ligase (824 aa).

Positions 42–52 match the 'HIGH' region motif; that stretch reads PYPSGRIHMGH. Residues 581–585 carry the 'KMSKS' region motif; sequence KMSKS. Lys-584 is a binding site for ATP.

Belongs to the class-I aminoacyl-tRNA synthetase family.

The protein resides in the cytoplasm. It catalyses the reaction tRNA(Leu) + L-leucine + ATP = L-leucyl-tRNA(Leu) + AMP + diphosphate. The chain is Leucine--tRNA ligase from Geobacter sulfurreducens (strain ATCC 51573 / DSM 12127 / PCA).